The primary structure comprises 740 residues: 1,4-alpha-glucan branching enzyme GlgB (740 aa).

The active-site Nucleophile is the Asp-414. Glu-467 serves as the catalytic Proton donor.

Belongs to the glycosyl hydrolase 13 family. GlgB subfamily. Monomer.

The catalysed reaction is Transfers a segment of a (1-&gt;4)-alpha-D-glucan chain to a primary hydroxy group in a similar glucan chain.. Its pathway is glycan biosynthesis; glycogen biosynthesis. In terms of biological role, catalyzes the formation of the alpha-1,6-glucosidic linkages in glycogen by scission of a 1,4-alpha-linked oligosaccharide from growing alpha-1,4-glucan chains and the subsequent attachment of the oligosaccharide to the alpha-1,6 position. In Rhodospirillum rubrum (strain ATCC 11170 / ATH 1.1.1 / DSM 467 / LMG 4362 / NCIMB 8255 / S1), this protein is 1,4-alpha-glucan branching enzyme GlgB.